A 793-amino-acid polypeptide reads, in one-letter code: MAGWIQAQQLQGDALRQMQVLYGQHFPIEVRHYLAQWIESQPWDAIDLDNPQDRGQATQLLEGLVQELQKKAEHQVGEDGFLLKIKLGHYATQLQNTYDRCPMELVRCIRHILYNEQRLVREANNCSSPAGVLVDAMSQKHLQINQRFEELRLITQDTENELKKLQQTQEYFIIQYQESLRIQAQFAQLGQLNPQERMSRETALQQKQVSLETWLQREAQTLQQYRVELAEKHQKTLQLLRKQQTIILDDELIQWKRRQQLAGNGGPPEGSLDVLQSWCEKLAEIIWQNRQQIRRAEHLCQQLPIPGPVEEMLAEVNATITDIISALVTSTFIIEKQPPQVLKTQTKFAATVRLLVGGKLNVHMNPPQVKATIISEQQAKSLLKNENTRNECSGEILNNCCVMEYHQATGTLSAHFRNMSLKRIKRADRRGAESVTEEKFTVLFESQFSVGSNELVFQVKTLSLPVVVIVHGSQDHNATATVLWDNAFAEPGRVPFAVPDKVLWPQLCEALNMKFKAEVQSNRGLTKENLVFLAQKLFNISSNHLEDYNSMSVSWSQFNRENLPGWNYTFWQWFDGVMEVLKKHHKPHWNDGAILGFVNKQQAHDLLINKPDGTFLLRFSDSEIGGITIAWKFDSPDRNLWNLKPFTTRDFSIRSLADRLGDLNYLIYVFPDRPKDEVFAKYYTPVLAKAVDGYVKPQIKQVVPEFVNASTDAGASATYMDQAPSPVVCPQPHYNMYPPNPDPVLDQDGEFDLDESMDVARHVEELLRRPMDSLDARLSPPAGLFTSARSSLS.

Tyrosine 90 bears the Phosphotyrosine mark. Phosphoserine is present on serine 128. One can recognise an SH2 domain in the interval 589–686 (WNDGAILGFV…EVFAKYYTPV (98 aa)). Residues tyrosine 682 and tyrosine 694 each carry the phosphotyrosine modification. Serine 779 bears the Phosphoserine mark.

This sequence belongs to the transcription factor STAT family. Forms a homodimer or a heterodimer with a related family member. Interacts with NCOA1 and SOCS7. Binds NR3C1. Interacts with ERBB4. Interacts with EBF4. Interacts with CD69. In terms of processing, ISGylated. Post-translationally, tyrosine phosphorylated in response to KITLG/SCF, IL2, IL3, IL7, IL15, CSF2/GMCSF, GH1, PRL, EPO and THPO. Activated KIT promotes phosphorylation on tyrosine residues and subsequent translocation to the nucleus. Tyrosine phosphorylated in response to constitutively activated FGFR1, FGFR2, FGFR3 and FGFR4. Tyrosine phosphorylation is required for DNA-binding activity and dimerization. Serine phosphorylation is also required for maximal transcriptional activity. Tyrosine phosphorylated in response to signaling via activated FLT3; wild-type FLT3 results in much weaker phosphorylation than constitutively activated mutant FLT3. Alternatively, can be phosphorylated by JAK2 at Tyr-694. In the virgin, found in most tissues except brain and muscle. During lactation, abundantly found in mammary tissue, as well as in other secretory organs such as salivary gland and seminal vesicle.

The protein localises to the cytoplasm. Its subcellular location is the nucleus. Functionally, carries out a dual function: signal transduction and activation of transcription. Mediates cellular responses to the cytokine KITLG/SCF and other growth factors. May mediate cellular responses to activated FGFR1, FGFR2, FGFR3 and FGFR4. Binds to the GAS element and activates PRL-induced transcription. Regulates the expression of milk proteins during lactation. This Mus musculus (Mouse) protein is Signal transducer and activator of transcription 5A (Stat5a).